Reading from the N-terminus, the 147-residue chain is Hemoglobin subunit beta (147 aa).

A Globin domain is found at 3–147 (EWTDDERAII…VVSALGRQYH (145 aa)). Heme b-binding residues include His64 and His93.

The protein belongs to the globin family. Heterotetramer of two alpha chains and two beta chains. Red blood cells.

Its function is as follows. Involved in oxygen transport from gills to the various peripheral tissues. This Melanogrammus aeglefinus (Haddock) protein is Hemoglobin subunit beta (hbb).